We begin with the raw amino-acid sequence, 184 residues long: Putative tetraheme cytochrome-c type (184 aa).

The Cytoplasmic segment spans residues 1 to 14 (MSKHAASSAKRFSL). Residues 15–35 (LALGLMFVGGIVFVWAVDFGI) traverse the membrane as a helical segment. Residues 36-184 (KTTNTLEFCT…HEPTEPDDAS (149 aa)) are Periplasmic-facing. Positions 44, 47, 50, 73, 76, and 77 each coordinate heme. 2 residues coordinate substrate: lysine 89 and aspartate 95. Heme-binding residues include aspartate 95, cysteine 133, cysteine 136, histidine 137, cysteine 165, cysteine 168, histidine 169, and histidine 174.

Belongs to the NapC/NirT/NrfH family. Binds 4 heme groups per subunit.

The protein resides in the cell inner membrane. The chain is Putative tetraheme cytochrome-c type from Allochromatium vinosum (strain ATCC 17899 / DSM 180 / NBRC 103801 / NCIMB 10441 / D) (Chromatium vinosum).